The primary structure comprises 882 residues: DNA mismatch repair protein MutS (882 aa).

629-636 (GPNMGGKS) contacts ATP.

This sequence belongs to the DNA mismatch repair MutS family.

Its function is as follows. This protein is involved in the repair of mismatches in DNA. It is possible that it carries out the mismatch recognition step. This protein has a weak ATPase activity. This chain is DNA mismatch repair protein MutS, found in Ralstonia pickettii (strain 12J).